A 333-amino-acid chain; its full sequence is G-protein coupled receptor 146 (333 aa).

Residues 1–22 (MWSCGPLNSTAWAEEPLCRNLR) are Extracellular-facing. N-linked (GlcNAc...) asparagine glycosylation is present at N8. The helical transmembrane segment at 23–43 (LGLWVLSLLYLGAGVPVSLGY) threads the bilayer. The Cytoplasmic portion of the chain corresponds to 44 to 64 (NALLVLANLASKNTMTMPDVY). Residues 65–85 (FVNMAVAGLVLTALAPAYLLG) traverse the membrane as a helical segment. Residues 86-101 (PAHSRWALWSLSSEAH) are Extracellular-facing. The helical transmembrane segment at 102–122 (VTLLILFNVASLVTMYSTALL) threads the bilayer. Topologically, residues 123–145 (SLDYYIERALPRTYMASVYNTRH) are cytoplasmic. A helical membrane pass occupies residues 146-166 (VCGFVWGGAVLTSFSSLLFYI). Residues 167–188 (CSHVSSRIAECARMQNTEAADA) are Extracellular-facing. Residues 189–209 (ILVLIGYVVPGLAVLYALALI) form a helical membrane-spanning segment. Residues 210-232 (SRIGKEDTPLDQDTSRLDPSVHR) are Cytoplasmic-facing. A helical membrane pass occupies residues 233 to 253 (LLVATVCTQFGLWTPYYLSLG). The Extracellular portion of the chain corresponds to 254 to 277 (HTVLTSRGRTVEGHYLGILQVAKD). Residues 278-298 (LAKFLAFSSSSVTPLLYRYIN) traverse the membrane as a helical segment. Residues 299 to 333 (KAFPGKLRRLMKKMHCGRRHCSPDPSGIQQVMAQA) are Cytoplasmic-facing.

It belongs to the G-protein coupled receptor 1 family.

Its subcellular location is the cell membrane. In terms of biological role, GPCR receptor required for the regulation of plasma cholesterol levels. Receptor for CHLSN, a gut derived hormone which mediates an inhibitory effect of intestinal cholesterol absorption on hepatic cholesterol synthesis. Cholesin-binding exerts an antagonistic effect by inhibiting PKA signaling and suppressing SREBF2-controlled cholesterol in the liver. The polypeptide is G-protein coupled receptor 146 (Gpr146) (Mus musculus (Mouse)).